The following is a 114-amino-acid chain: Cell cycle protein GpsB (114 aa).

A coiled-coil region spans residues 42-77 (YQKMADMNNEVVKLSEENHKLKKELEELRLRVATSR). Residues 74-99 (ATSRPQDNKSFSSNNTTTNTSSNNVD) are disordered. Positions 85–97 (SSNNTTTNTSSNN) are enriched in low complexity.

Belongs to the GpsB family. As to quaternary structure, forms polymers through the coiled coil domains. Interacts with PBP1, MreC and EzrA.

Its subcellular location is the cytoplasm. Functionally, divisome component that associates with the complex late in its assembly, after the Z-ring is formed, and is dependent on DivIC and PBP2B for its recruitment to the divisome. Together with EzrA, is a key component of the system that regulates PBP1 localization during cell cycle progression. Its main role could be the removal of PBP1 from the cell pole after pole maturation is completed. Also contributes to the recruitment of PBP1 to the division complex. Not essential for septum formation. The protein is Cell cycle protein GpsB of Staphylococcus aureus (strain Mu3 / ATCC 700698).